We begin with the raw amino-acid sequence, 81 residues long: A-kinase anchor protein 7 isoform alpha (81 aa).

Gly-2 carries the N-myristoyl glycine lipid modification. The tract at residues 2 to 11 (GQLCCFPFAR) is required for membrane localization. Residues Cys-5 and Cys-6 are each lipidated (S-palmitoyl cysteine). The segment at 29–42 (LVRLSKRLVENAVL) is RII-binding. Residues 49 to 81 (LEETQNKKQPGEGNSTKAEEGDRNGDGSDNNRK) form a disordered region. A compositionally biased stretch (basic and acidic residues) spans 65-81 (KAEEGDRNGDGSDNNRK).

As to quaternary structure, binds cAMP-dependent protein kinase (PKA). Interacts with PRKCA; only the cytoplasmic form is capable of interacting with PRKCA.

Its subcellular location is the lateral cell membrane. Functionally, targets the cAMP-dependent protein kinase (PKA) to the plasma membrane, and permits functional coupling to the L-type calcium channel. The membrane-associated form reduces epithelial sodium channel (ENaC) activity, whereas the free cytoplasmic form may negatively regulate ENaC channel feedback inhibition by intracellular sodium. The polypeptide is A-kinase anchor protein 7 isoform alpha (Akap7) (Mus musculus (Mouse)).